Consider the following 380-residue polypeptide: Cytochrome b (380 aa).

The next 4 helical transmembrane spans lie at 34–54, 78–99, 114–134, and 179–199; these read FGSLLGMCLILQITTGIFLAM, WLLRGLHANGASIFFICLYFHI, WYTGIMLLFLTMATAFMGYIL, and FFTLHFLTPFIISSLTTIHLL. Positions 84 and 98 each coordinate heme b. Residues His-183 and His-197 each contribute to the heme b site. His-202 serves as a coordination point for a ubiquinone. The next 4 membrane-spanning stretches (helical) occupy residues 227–247, 289–309, 321–341, and 348–368; these read YKDLLGVNLLMIGLLTLTLFL, LGGVLALLSSVTILFIMPTLH, FTQILFWSPTADLVILTWIGA, and FIMIGQTASVFYFTLILLLIP.

It belongs to the cytochrome b family. As to quaternary structure, the cytochrome bc1 complex contains 3 respiratory subunits (MT-CYB, CYC1 and UQCRFS1), 2 core proteins (UQCRC1 and UQCRC2) and probably 6 low-molecular weight proteins. The cofactor is heme b.

It localises to the mitochondrion inner membrane. In terms of biological role, component of the ubiquinol-cytochrome c reductase complex (complex III or cytochrome b-c1 complex) that is part of the mitochondrial respiratory chain. The b-c1 complex mediates electron transfer from ubiquinol to cytochrome c. Contributes to the generation of a proton gradient across the mitochondrial membrane that is then used for ATP synthesis. The sequence is that of Cytochrome b (MT-CYB) from Pelomedusa subrufa (African side-necked turtle).